Reading from the N-terminus, the 330-residue chain is Flotillin-like protein FloA (330 aa).

2 helical membrane-spanning segments follow: residues 6-26 (LFLL…FTFV) and 28-48 (VMLW…TLIG).

It belongs to the flotillin-like FloA family. In terms of assembly, homooligomerizes.

The protein resides in the cell membrane. It localises to the membrane raft. Its function is as follows. Found in functional membrane microdomains (FMM) that may be equivalent to eukaryotic membrane rafts. FMMs are highly dynamic and increase in number as cells age. Flotillins are thought to be important factors in membrane fluidity. The chain is Flotillin-like protein FloA from Bacillus licheniformis (strain ATCC 14580 / DSM 13 / JCM 2505 / CCUG 7422 / NBRC 12200 / NCIMB 9375 / NCTC 10341 / NRRL NRS-1264 / Gibson 46).